Consider the following 243-residue polypeptide: 4-phosphopantoate--beta-alanine ligase (243 aa).

Residues Arg-15, Arg-37, 176 to 178 (DLN), and 182 to 183 (RT) contribute to the ATP site.

Belongs to the archaeal phosphopantothenate synthetase family. Homodimer.

It carries out the reaction (R)-4-phosphopantoate + beta-alanine + ATP = (R)-4'-phosphopantothenate + AMP + diphosphate + H(+). Its pathway is cofactor biosynthesis; coenzyme A biosynthesis. Its function is as follows. Catalyzes the condensation of (R)-4-phosphopantoate and beta-alanine to 4'-phosphopantothenate in the CoA biosynthesis pathway. The protein is 4-phosphopantoate--beta-alanine ligase of Methanospirillum hungatei JF-1 (strain ATCC 27890 / DSM 864 / NBRC 100397 / JF-1).